We begin with the raw amino-acid sequence, 258 residues long: Small ribosomal subunit protein uS2 (258 aa).

The segment at 222–258 is disordered; it reads GKALRDQDEAEQVEPVSQEEKDEVVAEAMSEADFEEQ.

The protein belongs to the universal ribosomal protein uS2 family.

This is Small ribosomal subunit protein uS2 from Campylobacter fetus subsp. fetus (strain 82-40).